Consider the following 441-residue polypeptide: Ribulose bisphosphate carboxylase large chain (441 aa).

Lysine 4 is modified (N6,N6,N6-trimethyllysine). Residues asparagine 113 and threonine 163 each contribute to the substrate site. Lysine 165 functions as the Proton acceptor in the catalytic mechanism. Lysine 167 lines the substrate pocket. Mg(2+) contacts are provided by lysine 191, aspartate 193, and glutamate 194. At lysine 191 the chain carries N6-carboxylysine. Histidine 284 (proton acceptor) is an active-site residue. Substrate-binding residues include arginine 285, histidine 317, and serine 369.

This sequence belongs to the RuBisCO large chain family. Type I subfamily. In terms of assembly, heterohexadecamer of 8 large chains and 8 small chains; disulfide-linked. The disulfide link is formed within the large subunit homodimers. It depends on Mg(2+) as a cofactor. The disulfide bond which can form in the large chain dimeric partners within the hexadecamer appears to be associated with oxidative stress and protein turnover.

The protein localises to the plastid. It is found in the chloroplast. The catalysed reaction is 2 (2R)-3-phosphoglycerate + 2 H(+) = D-ribulose 1,5-bisphosphate + CO2 + H2O. It catalyses the reaction D-ribulose 1,5-bisphosphate + O2 = 2-phosphoglycolate + (2R)-3-phosphoglycerate + 2 H(+). Its function is as follows. RuBisCO catalyzes two reactions: the carboxylation of D-ribulose 1,5-bisphosphate, the primary event in carbon dioxide fixation, as well as the oxidative fragmentation of the pentose substrate in the photorespiration process. Both reactions occur simultaneously and in competition at the same active site. The chain is Ribulose bisphosphate carboxylase large chain from Darlingtonia californica (California pitcher plant).